Reading from the N-terminus, the 478-residue chain is 3-isopropylmalate dehydratase large subunit (478 aa).

3 residues coordinate [4Fe-4S] cluster: C359, C420, and C423.

The protein belongs to the aconitase/IPM isomerase family. LeuC type 1 subfamily. As to quaternary structure, heterodimer of LeuC and LeuD. [4Fe-4S] cluster is required as a cofactor.

It carries out the reaction (2R,3S)-3-isopropylmalate = (2S)-2-isopropylmalate. Its pathway is amino-acid biosynthesis; L-leucine biosynthesis; L-leucine from 3-methyl-2-oxobutanoate: step 2/4. Catalyzes the isomerization between 2-isopropylmalate and 3-isopropylmalate, via the formation of 2-isopropylmaleate. The sequence is that of 3-isopropylmalate dehydratase large subunit from Psychrobacter sp. (strain PRwf-1).